The chain runs to 208 residues: Thymidylate kinase (208 aa).

Glycine 10 to serine 17 contributes to the ATP binding site.

The protein belongs to the thymidylate kinase family.

It catalyses the reaction dTMP + ATP = dTDP + ADP. In terms of biological role, phosphorylation of dTMP to form dTDP in both de novo and salvage pathways of dTTP synthesis. The sequence is that of Thymidylate kinase from Glaesserella parasuis serovar 5 (strain SH0165) (Haemophilus parasuis).